Reading from the N-terminus, the 255-residue chain is MDMTDGCQFSPSEYFYEGSCIPSPEDEFGDQFEPRVAAFGAHKAELQGSDDEEHVRAPTGHHQAGHCLMWACKACKRKSTTMDRRKAATMRERRRLKKVNQAFETLKRCTTTNPNQRLPKVEILRNAIRYIESLQELLREQVENYYSLPGQSCSEPTSPTSNCSDGMPECNSPVWSRKNSSFDSIYCPDVSNACAADKSSVSSLDCLSSIVDRITSTEPSELALQDTASLSPATSANSQPATPGPSSSRLIYHVL.

Positions 83-134 (DRRKAATMRERRRLKKVNQAFETLKRCTTTNPNQRLPKVEILRNAIRYIESL) constitute a bHLH domain. The tract at residues 226-249 (DTASLSPATSANSQPATPGPSSSR) is disordered.

As to quaternary structure, efficient DNA binding requires dimerization with another bHLH protein.

It is found in the nucleus. Its function is as follows. Acts as a transcriptional activator that promotes transcription of muscle-specific target genes and plays a role in muscle differentiation. Together with MYOG and MYOD1, co-occupies muscle-specific gene promoter core region during myogenesis. Induces fibroblasts to differentiate into myoblasts. Probable sequence specific DNA-binding protein. This is Myogenic factor 5 (Myf5) from Mus musculus (Mouse).